A 454-amino-acid polypeptide reads, in one-letter code: tRNA modification GTPase MnmE (454 aa).

(6S)-5-formyl-5,6,7,8-tetrahydrofolate is bound by residues Arg23, Glu80, and Lys120. Positions 216 to 377 (GMKVVIAGRP…LRNHLKQSMG (162 aa)) constitute a TrmE-type G domain. Asn226 is a K(+) binding site. GTP is bound by residues 226–231 (NAGKSS), 245–251 (TDIAGTT), 270–273 (DTAG), 335–338 (NKAD), and 358–360 (SAR). Ser230 contributes to the Mg(2+) binding site. K(+) contacts are provided by Thr245, Ile247, and Thr250. A Mg(2+)-binding site is contributed by Thr251. Lys454 serves as a coordination point for (6S)-5-formyl-5,6,7,8-tetrahydrofolate.

Belongs to the TRAFAC class TrmE-Era-EngA-EngB-Septin-like GTPase superfamily. TrmE GTPase family. In terms of assembly, homodimer. Heterotetramer of two MnmE and two MnmG subunits. K(+) serves as cofactor.

The protein localises to the cytoplasm. Its function is as follows. Exhibits a very high intrinsic GTPase hydrolysis rate. Involved in the addition of a carboxymethylaminomethyl (cmnm) group at the wobble position (U34) of certain tRNAs, forming tRNA-cmnm(5)s(2)U34. The sequence is that of tRNA modification GTPase MnmE from Escherichia coli O6:K15:H31 (strain 536 / UPEC).